The following is a 990-amino-acid chain: MIFSAITADLDNTALAARFGAGPRLYDPVLAAERWAGWLVDLAPEQADAIAALGNAFPDLQIALQSIAEASPYLFDLIRGDPVRLLRVLRGAPEQRLAKLLEDAETFVAAASAEDEVMAALRRLKAEAALLIALCDIGGIWPVMQVTQALTDLAGRSVQMALRFLLRLEAGRGRIVPPNPDCPEQGSGLIVLAMGKMGAGELNYSSDIDLIVFYELDAPTLAPDIEPQPFFVRVTQGLSRILQQRRGDGYVFRVDLRLRPDPASTPVALSTVSALDYYEREGRTWERAAMIKARPCAGDLVAGDALLSEIAPFVWRKHLDFAALSDVHDMKRQMQTYRGQTEIAVEGHNVKVGRGGIREIEFFAQTQQLIAGGRHPELRVRPTLEALEILAARNWITIQARDELTEAYLFLRKVEHRVQMIADEQTHALPDTVEAIERFSRFLGYDSRDSFARDLLGYLERVQGHYAKLFEGDPTGTAKLPPVDYGAGPEDTRLLDHLLSLGYKKPLMIATTLQQWMTGGYRVLKVETTQRAFREFVPALIEELARAEQPDDAVNAFDRLLQALHRGGRLISLLSQNRELLTLVALVLGAAPRLGDMLARQPQILDGLIDPRFFGAMPDQAELSARLAVTLADAGSYEEFLDRLRLFGQESLFLIGTRILSGTVPTQQAAVAFADVAEGIVGTVHGLVSEQFASTYGRVKGQQTAILAMGKLGSREMTASSDLDLILIYDFDDDQPDSDGERSLHGAQYFARFTQRLISAFTTRTNYGVLYDVDMRLRPSGRAGPVASRLDAFAAYQEQEAWTWEHLALTRARVISAPPEFRSRIEQVIRAVLTRPRDAAIIANDVAEMRRAIAQEKGEDDVWDLKYAAGGMVDIDFIAQYLQLVHAHEAPDILHVNTLSALDNATRLGLLAQADAEVLRPAARLYQNLTQILRLCVSEKFNPDTAGDDLLRVMVRAGDAPDFSSLQARVKETQSDVRAIFNRLIGGEDA.

An adenylyl removase region spans residues 1-474 (MIFSAITADL…HYAKLFEGDP (474 aa)). The tract at residues 478–990 (AKLPPVDYGA…FNRLIGGEDA (513 aa)) is adenylyl transferase.

This sequence belongs to the GlnE family. The cofactor is Mg(2+).

It catalyses the reaction [glutamine synthetase]-O(4)-(5'-adenylyl)-L-tyrosine + phosphate = [glutamine synthetase]-L-tyrosine + ADP. The catalysed reaction is [glutamine synthetase]-L-tyrosine + ATP = [glutamine synthetase]-O(4)-(5'-adenylyl)-L-tyrosine + diphosphate. Its function is as follows. Involved in the regulation of glutamine synthetase GlnA, a key enzyme in the process to assimilate ammonia. When cellular nitrogen levels are high, the C-terminal adenylyl transferase (AT) inactivates GlnA by covalent transfer of an adenylyl group from ATP to specific tyrosine residue of GlnA, thus reducing its activity. Conversely, when nitrogen levels are low, the N-terminal adenylyl removase (AR) activates GlnA by removing the adenylyl group by phosphorolysis, increasing its activity. The regulatory region of GlnE binds the signal transduction protein PII (GlnB) which indicates the nitrogen status of the cell. The protein is Bifunctional glutamine synthetase adenylyltransferase/adenylyl-removing enzyme of Rhodopseudomonas palustris (strain TIE-1).